We begin with the raw amino-acid sequence, 472 residues long: MAPKTIIEKIWDAHTVIGEEGKPSLLYIDLHMVHEVTSPQAFEGLRLAGRPVRRPDLTFATMDHNVPTVDRFNIQDQIARKQIETLEANCKEFGIEIAGLDSPNNGIVHVIGPELGLTQPGKTIVCGDSHTSTHGAFGALAFGIGTSEVEHVLATQTLWQSKPKTMEVRVTGELAPSVSAKDIILAVIAKYGVDFGTGHVIEFTGEAIRSLSMEERMTICNMSIEAGAKAGLISPDSVTFEYLRGRPNAPKGEAFDVAIQQWEALATDAGAVYDRVLTMNASEIEPMVTWGTNPAQGTGVSQVVPSPDDAKDENERRAIKQSLAYMGLEPGTPITEIAIQHVFIGSCTNSRLSDLRTAAELIKGRKVADGVRALVVPGSQQVKRAAEKEGLDEIFKEAGFEWRDSGCSMCLGMNPDTVPEGERCASTSNRNFEGRQGKGARTHLVSPQMAAAAAIAGHFVDVRTFQSEPQTV.

Positions 289 to 312 are disordered; sequence TWGTNPAQGTGVSQVVPSPDDAKD. Polar residues predominate over residues 290-304; it reads WGTNPAQGTGVSQVV. The [4Fe-4S] cluster site is built by cysteine 347, cysteine 407, and cysteine 410.

This sequence belongs to the aconitase/IPM isomerase family. LeuC type 1 subfamily. Heterodimer of LeuC and LeuD. Requires [4Fe-4S] cluster as cofactor.

The enzyme catalyses (2R,3S)-3-isopropylmalate = (2S)-2-isopropylmalate. It functions in the pathway amino-acid biosynthesis; L-leucine biosynthesis; L-leucine from 3-methyl-2-oxobutanoate: step 2/4. In terms of biological role, catalyzes the isomerization between 2-isopropylmalate and 3-isopropylmalate, via the formation of 2-isopropylmaleate. The protein is 3-isopropylmalate dehydratase large subunit of Halalkalibacterium halodurans (strain ATCC BAA-125 / DSM 18197 / FERM 7344 / JCM 9153 / C-125) (Bacillus halodurans).